The sequence spans 662 residues: ABC transporter G family member 17 (662 aa).

An ABC transporter domain is found at 22–276 (LAFNDLTYNV…FSEFGSPIPE (255 aa)). 69 to 76 (GASGAGKS) is an ATP binding site. Residues 356–566 (VETVILAKRY…PYEAVLHNEF (211 aa)) enclose the ABC transmembrane type-2 domain. Helical transmembrane passes span 375-395 (LIGT…TVYW), 410-430 (FFSF…PAFI), 451-471 (VISH…GFAA), 486-508 (FIYY…TFVS), 514-536 (VMMS…GFYV), and 635-655 (LWVT…SLLL).

This sequence belongs to the ABC transporter superfamily. ABCG family. Eye pigment precursor importer (TC 3.A.1.204) subfamily.

The protein localises to the membrane. The polypeptide is ABC transporter G family member 17 (ABCG17) (Arabidopsis thaliana (Mouse-ear cress)).